The following is a 449-amino-acid chain: Glutamate--tRNA ligase 1 (449 aa).

The 'HIGH' region motif lies at 11–21 (PSPTGSLHVGN). A 'KMSKS' region motif is present at residues 242-246 (PLSKR). Position 245 (K245) interacts with ATP.

The protein belongs to the class-I aminoacyl-tRNA synthetase family. Glutamate--tRNA ligase type 1 subfamily. As to quaternary structure, monomer.

It is found in the cytoplasm. The catalysed reaction is tRNA(Glu) + L-glutamate + ATP = L-glutamyl-tRNA(Glu) + AMP + diphosphate. Catalyzes the attachment of glutamate to tRNA(Glu) in a two-step reaction: glutamate is first activated by ATP to form Glu-AMP and then transferred to the acceptor end of tRNA(Glu). This is Glutamate--tRNA ligase 1 from Parvibaculum lavamentivorans (strain DS-1 / DSM 13023 / NCIMB 13966).